Here is a 937-residue protein sequence, read N- to C-terminus: Protein translocase subunit SecA (937 aa).

ATP contacts are provided by residues Q90, 108-112 (GEGKT), and D509.

This sequence belongs to the SecA family. Monomer and homodimer. Part of the essential Sec protein translocation apparatus which comprises SecA, SecYEG and auxiliary proteins SecDF. Other proteins may also be involved.

It is found in the cell inner membrane. Its subcellular location is the cellular thylakoid membrane. The protein localises to the cytoplasm. It catalyses the reaction ATP + H2O + cellular proteinSide 1 = ADP + phosphate + cellular proteinSide 2.. Its function is as follows. Part of the Sec protein translocase complex. Interacts with the SecYEG preprotein conducting channel. Has a central role in coupling the hydrolysis of ATP to the transfer of proteins into and across the cell membrane, serving as an ATP-driven molecular motor driving the stepwise translocation of polypeptide chains across the membrane. Probably participates in protein translocation into and across both the cytoplasmic and thylakoid membranes in cyanobacterial cells. This is Protein translocase subunit SecA from Parasynechococcus marenigrum (strain WH8102).